A 197-amino-acid chain; its full sequence is MAVVPIRIVGDPVLHTPTSPVPVGADGSLPADLPELIATMYETMDAAHGVGLAANQIGYGLRLFVYDCADDRRKAAHRRGVVINPVLETSEIPENMPDPDNDDEGCLSVPGESFPTGRATWARVTGLDAEGNPVELEGSGLFARMLQHETGHLDGYLYLDCLIGRHARSAKRAVKSHGWGVPGLSWLPGEGPDPFGH.

Fe cation contacts are provided by Cys-106 and His-148. Glu-149 is an active-site residue. Residue His-152 coordinates Fe cation.

It belongs to the polypeptide deformylase family. Fe(2+) is required as a cofactor.

The catalysed reaction is N-terminal N-formyl-L-methionyl-[peptide] + H2O = N-terminal L-methionyl-[peptide] + formate. Removes the formyl group from the N-terminal Met of newly synthesized proteins. Requires at least a dipeptide for an efficient rate of reaction. N-terminal L-methionine is a prerequisite for activity but the enzyme has broad specificity at other positions. The sequence is that of Peptide deformylase from Mycobacterium ulcerans (strain Agy99).